Consider the following 1152-residue polypeptide: DNA-directed RNA polymerase subunit beta (1152 aa).

It belongs to the RNA polymerase beta chain family. As to quaternary structure, the RNAP catalytic core consists of 2 alpha, 1 beta, 1 beta' and 1 omega subunit. When a sigma factor is associated with the core the holoenzyme is formed, which can initiate transcription.

It catalyses the reaction RNA(n) + a ribonucleoside 5'-triphosphate = RNA(n+1) + diphosphate. In terms of biological role, DNA-dependent RNA polymerase catalyzes the transcription of DNA into RNA using the four ribonucleoside triphosphates as substrates. The polypeptide is DNA-directed RNA polymerase subunit beta (Deinococcus geothermalis (strain DSM 11300 / CIP 105573 / AG-3a)).